The following is a 754-amino-acid chain: Subtilisin-like protease SBT3.12 (754 aa).

The first 28 residues, 1–28, serve as a signal peptide directing secretion; the sequence is MGIVKGRSRAGLFIGFLFIVNVGFCVFA. Residues 29 to 117 constitute a propeptide, activation peptide; sequence QESSNEERKI…VAPNRKVELQ (89 aa). Positions 39–116 constitute an Inhibitor I9 domain; sequence YVVHLGVRRH…SVAPNRKVEL (78 aa). A Peptidase S8 domain is found at 121–606; the sequence is IYDYLGLSPS…AGLVNAERAK (486 aa). The active-site Charge relay system is the Asp-151. An N-linked (GlcNAc...) asparagine glycan is attached at Asn-206. The Charge relay system role is filled by His-224. Residues Asn-239 and Asn-369 are each glycosylated (N-linked (GlcNAc...) asparagine). Ser-537 acts as the Charge relay system in catalysis. Residues Asn-629 and Asn-740 are each glycosylated (N-linked (GlcNAc...) asparagine).

Belongs to the peptidase S8 family.

The protein resides in the secreted. This is Subtilisin-like protease SBT3.12 from Arabidopsis thaliana (Mouse-ear cress).